Reading from the N-terminus, the 167-residue chain is Ribosome maturation factor RimM (167 aa).

The region spanning 94-166 (TGRAYLHELI…YMVVPRFDEF (73 aa)) is the PRC barrel domain.

It belongs to the RimM family. In terms of assembly, binds ribosomal protein uS19.

It is found in the cytoplasm. Functionally, an accessory protein needed during the final step in the assembly of 30S ribosomal subunit, possibly for assembly of the head region. Essential for efficient processing of 16S rRNA. May be needed both before and after RbfA during the maturation of 16S rRNA. It has affinity for free ribosomal 30S subunits but not for 70S ribosomes. In Chlorobium phaeobacteroides (strain DSM 266 / SMG 266 / 2430), this protein is Ribosome maturation factor RimM.